The sequence spans 321 residues: ATP-dependent 6-phosphofructokinase (321 aa).

Glycine 11 lines the ATP pocket. Residue 21-25 (RAVVR) coordinates ADP. ATP is bound by residues 72–73 (RC) and 102–105 (GDGS). Aspartate 103 is a Mg(2+) binding site. 126–128 (TID) contacts substrate. The Proton acceptor role is filled by aspartate 128. Arginine 155 provides a ligand contact to ADP. Residues arginine 163 and 170-172 (MGR) contribute to the substrate site. Residues 186 to 188 (GAE), arginine 212, and 214 to 216 (KLH) each bind ADP. Substrate contacts are provided by residues glutamate 223, arginine 245, and 251-254 (HIQR).

The protein belongs to the phosphofructokinase type A (PFKA) family. ATP-dependent PFK group I subfamily. Prokaryotic clade 'B1' sub-subfamily. Homotetramer. Requires Mg(2+) as cofactor.

The protein resides in the cytoplasm. It catalyses the reaction beta-D-fructose 6-phosphate + ATP = beta-D-fructose 1,6-bisphosphate + ADP + H(+). The protein operates within carbohydrate degradation; glycolysis; D-glyceraldehyde 3-phosphate and glycerone phosphate from D-glucose: step 3/4. Its activity is regulated as follows. Allosterically activated by ADP and other diphosphonucleosides, and allosterically inhibited by phosphoenolpyruvate. In terms of biological role, catalyzes the phosphorylation of D-fructose 6-phosphate to fructose 1,6-bisphosphate by ATP, the first committing step of glycolysis. The polypeptide is ATP-dependent 6-phosphofructokinase (Caldanaerobacter subterraneus subsp. tengcongensis (strain DSM 15242 / JCM 11007 / NBRC 100824 / MB4) (Thermoanaerobacter tengcongensis)).